Reading from the N-terminus, the 253-residue chain is Tryptophan synthase alpha chain (253 aa).

Active-site proton acceptor residues include E46 and D57.

The protein belongs to the TrpA family. As to quaternary structure, tetramer of two alpha and two beta chains.

The catalysed reaction is (1S,2R)-1-C-(indol-3-yl)glycerol 3-phosphate + L-serine = D-glyceraldehyde 3-phosphate + L-tryptophan + H2O. It functions in the pathway amino-acid biosynthesis; L-tryptophan biosynthesis; L-tryptophan from chorismate: step 5/5. The alpha subunit is responsible for the aldol cleavage of indoleglycerol phosphate to indole and glyceraldehyde 3-phosphate. The protein is Tryptophan synthase alpha chain of Dictyoglomus thermophilum (strain ATCC 35947 / DSM 3960 / H-6-12).